The primary structure comprises 425 residues: Enolase (425 aa).

Q162 serves as a coordination point for (2R)-2-phosphoglycerate. The Proton donor role is filled by E204. The Mg(2+) site is built by D241, E282, and D309. (2R)-2-phosphoglycerate is bound by residues K334, R363, S364, and K385. K334 functions as the Proton acceptor in the catalytic mechanism.

Belongs to the enolase family. Requires Mg(2+) as cofactor.

It localises to the cytoplasm. The protein localises to the secreted. Its subcellular location is the cell surface. It catalyses the reaction (2R)-2-phosphoglycerate = phosphoenolpyruvate + H2O. It functions in the pathway carbohydrate degradation; glycolysis; pyruvate from D-glyceraldehyde 3-phosphate: step 4/5. In terms of biological role, catalyzes the reversible conversion of 2-phosphoglycerate (2-PG) into phosphoenolpyruvate (PEP). It is essential for the degradation of carbohydrates via glycolysis. The protein is Enolase of Corynebacterium urealyticum (strain ATCC 43042 / DSM 7109).